The chain runs to 353 residues: UPF0283 membrane protein YcjF (353 aa).

Positions 1-19 (MSEPLKPRIDFAEPLKEEP) are enriched in basic and acidic residues. Positions 1–35 (MSEPLKPRIDFAEPLKEEPTSAFKAQQTFSEAESR) are disordered. 3 helical membrane-spanning segments follow: residues 70 to 90 (MVMG…LQWT), 100 to 120 (VALG…GSVV), and 213 to 233 (ESTL…FIAW).

It belongs to the UPF0283 family.

It localises to the cell inner membrane. This Salmonella choleraesuis (strain SC-B67) protein is UPF0283 membrane protein YcjF.